The primary structure comprises 152 residues: Interleukin-3 (152 aa).

An N-terminal signal peptide occupies residues 1 to 19 (MSRLPVLLLLQLLVRPGLQ). 2 N-linked (GlcNAc...) asparagine glycosylation sites follow: Asn34 and Asn89. Cys35 and Cys103 are disulfide-bonded.

It belongs to the IL-3 family. As to quaternary structure, monomer. In terms of tissue distribution, activated T-cells, mast cells, natural killer cells.

The protein resides in the secreted. Granulocyte/macrophage colony-stimulating factors are cytokines that act in hematopoiesis by controlling the production, differentiation, and function of 2 related white cell populations of the blood, the granulocytes and the monocytes-macrophages. Functionally, this CSF induces granulocytes, macrophages, mast cells, stem cells, erythroid cells, eosinophils and megakaryocytes. This is Interleukin-3 (IL3) from Pan troglodytes (Chimpanzee).